A 272-amino-acid polypeptide reads, in one-letter code: Putative phosphoenolpyruvate synthase regulatory protein (272 aa).

152–159 (GVSRCGKT) is an ADP binding site.

It belongs to the pyruvate, phosphate/water dikinase regulatory protein family. PSRP subfamily.

The enzyme catalyses [pyruvate, water dikinase] + ADP = [pyruvate, water dikinase]-phosphate + AMP + H(+). It carries out the reaction [pyruvate, water dikinase]-phosphate + phosphate + H(+) = [pyruvate, water dikinase] + diphosphate. Functionally, bifunctional serine/threonine kinase and phosphorylase involved in the regulation of the phosphoenolpyruvate synthase (PEPS) by catalyzing its phosphorylation/dephosphorylation. The polypeptide is Putative phosphoenolpyruvate synthase regulatory protein (Pseudomonas fluorescens (strain Pf0-1)).